The following is a 356-amino-acid chain: Peptide chain release factor 1 (356 aa).

Position 233 is an N5-methylglutamine (glutamine 233).

It belongs to the prokaryotic/mitochondrial release factor family. Methylated by PrmC. Methylation increases the termination efficiency of RF1.

It is found in the cytoplasm. Functionally, peptide chain release factor 1 directs the termination of translation in response to the peptide chain termination codons UAG and UAA. In Endomicrobium trichonymphae, this protein is Peptide chain release factor 1.